The chain runs to 339 residues: Cullin-associated NEDD8-dissociated protein 1, N-terminal part (339 aa).

HEAT repeat units follow at residues 5-42 and 50-87; these read HTIQQNLNGLLSKLNDPDPDMRYMSLNDLYGILSNPCS and ASATRLAEGLLKALDDQHGDVQNQALKCLGPLVARLPL.

Interacts with candA-C. Interacts with unneddylated cullins culA and culD; interaction occurs only when complexed with candA-C.

Its subcellular location is the nucleus. In terms of biological role, assembly factor of SCF (SKP1-CUL1-F-box protein) E3 ubiquitin ligase complexes that promotes the exchange of the substrate-recognition F-box subunit in SCF complexes, thereby playing a key role in the cellular repertoire of SCF complexes. Acts as a F-box protein exchange factor when interacting with candA-C. The protein is Cullin-associated NEDD8-dissociated protein 1, N-terminal part (candA-N) of Emericella nidulans (strain FGSC A4 / ATCC 38163 / CBS 112.46 / NRRL 194 / M139) (Aspergillus nidulans).